A 58-amino-acid chain; its full sequence is Attractin (58 aa).

3 disulfide bridges follow: cysteine 4/cysteine 41, cysteine 13/cysteine 33, and cysteine 20/cysteine 26. N-linked (GlcNAc...) asparagine glycosylation occurs at asparagine 8.

In terms of tissue distribution, produced by the albumen gland of the egg cordons.

It localises to the secreted. In terms of biological role, water-borne pheromone that attract the marine mollusk Aplysia into breeding aggregations and coordinate male and female reproductive behavior within the aggregation. This is Attractin (ATT) from Aplysia fasciata (Mottled sea hare).